We begin with the raw amino-acid sequence, 295 residues long: uncharacterized protein (295 aa).

The signal sequence occupies residues 1–26 (MKKYLALAAIVAICALWLTQNSNFEA).

This is an uncharacterized protein from Archaeoglobus fulgidus (strain ATCC 49558 / DSM 4304 / JCM 9628 / NBRC 100126 / VC-16).